Reading from the N-terminus, the 853-residue chain is Translation initiation factor IF-2 (853 aa).

Disordered stretches follow at residues 1 to 68 and 94 to 265; these read MSDT…ASDG and LEQR…DKTS. Positions 20 to 32 are enriched in polar residues; that stretch reads RKTSGTVKQSFSH. The segment covering 94–161 has biased composition (basic and acidic residues); sequence LEQRKAEEAS…ASREAVERPS (68 aa). Positions 163–176 are enriched in low complexity; that stretch reads APRAAPAAQTPPAA. Basic and acidic residues-rich tracts occupy residues 196 to 219 and 245 to 265; these read PARD…DAER and RARE…DKTS. The tr-type G domain maps to 347 to 515; sequence PRAPIVTIMG…AISIQAEILE (169 aa). Positions 356–363 are G1; it reads GHVDHGKT. 356-363 contributes to the GTP binding site; that stretch reads GHVDHGKT. Positions 381 to 385 are G2; the sequence is GITQH. The G3 stretch occupies residues 403-406; the sequence is DTPG. GTP-binding positions include 403–407 and 457–460; these read DTPGH and TKSD. Residues 457–460 form a G4 region; sequence TKSD. The interval 493–495 is G5; that stretch reads SAK.

This sequence belongs to the TRAFAC class translation factor GTPase superfamily. Classic translation factor GTPase family. IF-2 subfamily.

The protein localises to the cytoplasm. In terms of biological role, one of the essential components for the initiation of protein synthesis. Protects formylmethionyl-tRNA from spontaneous hydrolysis and promotes its binding to the 30S ribosomal subunits. Also involved in the hydrolysis of GTP during the formation of the 70S ribosomal complex. The protein is Translation initiation factor IF-2 of Hyphomonas neptunium (strain ATCC 15444).